Here is a 164-residue protein sequence, read N- to C-terminus: Lipoprotein signal peptidase (164 aa).

3 helical membrane passes run 12-32 (WLWL…LILQ), 70-90 (WFFA…MYRS), and 102-122 (ALII…GFVV). Residues aspartate 123 and aspartate 141 contribute to the active site. A helical membrane pass occupies residues 137 to 157 (FNLADTAICVGAALIVLEGFL).

The protein belongs to the peptidase A8 family.

The protein resides in the cell inner membrane. The enzyme catalyses Release of signal peptides from bacterial membrane prolipoproteins. Hydrolyzes -Xaa-Yaa-Zaa-|-(S,diacylglyceryl)Cys-, in which Xaa is hydrophobic (preferably Leu), and Yaa (Ala or Ser) and Zaa (Gly or Ala) have small, neutral side chains.. The protein operates within protein modification; lipoprotein biosynthesis (signal peptide cleavage). This protein specifically catalyzes the removal of signal peptides from prolipoproteins. This chain is Lipoprotein signal peptidase, found in Escherichia coli O9:H4 (strain HS).